Here is a 252-residue protein sequence, read N- to C-terminus: Glucosamine-6-phosphate deaminase (252 aa).

D67 serves as the catalytic Proton acceptor; for enolization step. N137 serves as the catalytic For ring-opening step. H139 acts as the Proton acceptor; for ring-opening step in catalysis. E144 (for ring-opening step) is an active-site residue.

It belongs to the glucosamine/galactosamine-6-phosphate isomerase family. NagB subfamily.

It catalyses the reaction alpha-D-glucosamine 6-phosphate + H2O = beta-D-fructose 6-phosphate + NH4(+). The protein operates within amino-sugar metabolism; N-acetylneuraminate degradation; D-fructose 6-phosphate from N-acetylneuraminate: step 5/5. Catalyzes the reversible isomerization-deamination of glucosamine 6-phosphate (GlcN6P) to form fructose 6-phosphate (Fru6P) and ammonium ion. The sequence is that of Glucosamine-6-phosphate deaminase from Staphylococcus aureus (strain Mu3 / ATCC 700698).